Here is a 180-residue protein sequence, read N- to C-terminus: Transcription repressor NadR (180 aa).

Homodimer.

Functionally, in the presence of nicotinic acid represses transcription of the nadBCA and nifS-nadR operons. Also binds to DNA upstream of the niaP gene, probably regulating it as well. May bind nicotinic acid. The protein is Transcription repressor NadR (nadR) of Bacillus subtilis (strain 168).